The chain runs to 320 residues: tRNA dimethylallyltransferase (320 aa).

An ATP-binding site is contributed by Gly-10–Thr-17. Residue Thr-12–Thr-17 coordinates substrate. 3 interaction with substrate tRNA regions span residues Asp-35–Leu-38, Gln-159–Arg-163, and Arg-241–Arg-246.

Belongs to the IPP transferase family. As to quaternary structure, monomer. The cofactor is Mg(2+).

It catalyses the reaction adenosine(37) in tRNA + dimethylallyl diphosphate = N(6)-dimethylallyladenosine(37) in tRNA + diphosphate. In terms of biological role, catalyzes the transfer of a dimethylallyl group onto the adenine at position 37 in tRNAs that read codons beginning with uridine, leading to the formation of N6-(dimethylallyl)adenosine (i(6)A). The sequence is that of tRNA dimethylallyltransferase from Aromatoleum aromaticum (strain DSM 19018 / LMG 30748 / EbN1) (Azoarcus sp. (strain EbN1)).